A 720-amino-acid polypeptide reads, in one-letter code: Catalase-peroxidase (720 aa).

A cross-link (tryptophyl-tyrosyl-methioninium (Trp-Tyr) (with M-248)) is located at residues 94 to 222 (WHAAGTYRIA…LAAVTMGLIY (129 aa)). H95 (proton acceptor) is an active-site residue. Positions 222–248 (YVNPEGVDGNPDPLKTAHDVRVTFARM) form a cross-link, tryptophyl-tyrosyl-methioninium (Tyr-Met) (with W-94). Residue H263 participates in heme b binding.

Belongs to the peroxidase family. Peroxidase/catalase subfamily. Homodimer. The cofactor is heme b. In terms of processing, formation of the three residue Trp-Tyr-Met cross-link is important for the catalase, but not the peroxidase activity of the enzyme.

The catalysed reaction is H2O2 + AH2 = A + 2 H2O. It carries out the reaction 2 H2O2 = O2 + 2 H2O. Its function is as follows. Bifunctional enzyme with both catalase and broad-spectrum peroxidase activity. The polypeptide is Catalase-peroxidase (Synechococcus elongatus (strain ATCC 33912 / PCC 7942 / FACHB-805) (Anacystis nidulans R2)).